The sequence spans 182 residues: uncharacterized protein (182 aa).

This sequence belongs to the staphylococcal tandem lipoprotein family.

This is an uncharacterized protein from Staphylococcus haemolyticus (strain JCSC1435).